A 462-amino-acid chain; its full sequence is Aquaporin-1 (462 aa).

Positions 1–11 are enriched in polar residues; that stretch reads MTMRSPLTNDH. The segment at 1 to 24 is disordered; sequence MTMRSPLTNDHPQPLRASPLSEHD. The Cytoplasmic segment spans residues 1-146; it reads MTMRSPLTND…KWMNSDWKNH (146 aa). Residues 147–167 form a helical membrane-spanning segment; that stretch reads IVAVIGELIGTSLFLFFGYAG. Over 168-182 the chain is Extracellular; the sequence is IEVAKLQGREPPDLE. The chain crosses the membrane as a helical span at residues 183-203; sequence VLFYISATFGASLMVTAWIFF. Topologically, residues 204 to 229 are cytoplasmic; the sequence is RISGGLFNPAVTLALAILKAVSPIRA. An NPA 1 motif is present at residues 211-213; that stretch reads NPA. Residues 230 to 250 traverse the membrane as a helical segment; sequence FLLVITQLGASCLAAILVQEI. Over 251–269 the chain is Extracellular; that stretch reads FPKQLDVATTLGSGTSMGQ. The chain crosses the membrane as a helical span at residues 270–290; the sequence is GFVIEAITTAALIFTIIMLAV. The Cytoplasmic segment spans residues 291 to 296; sequence EKHKAT. The helical transmembrane segment at 297 to 317 threads the bilayer; the sequence is FVAPIGIGLALFVAHMVAVPF. Topologically, residues 318–341 are extracellular; it reads TGASLNPARSFGPSAIVWNFPREH. Residues 323-325 carry the NPA 2 motif; it reads NPA. The chain crosses the membrane as a helical span at residues 342 to 362; sequence WIYWVGPILGAGLAVLFFRLI. Over 363–462 the chain is Cytoplasmic; sequence KLMEYEMANP…WRRQQYRNVV (100 aa). Residues 407–433 are disordered; it reads GKSWYRDDSSSGSMRRKESVNSFTGGR. Positions 410–425 are enriched in basic and acidic residues; sequence WYRDDSSSGSMRRKES.

Belongs to the MIP/aquaporin (TC 1.A.8) family.

The protein resides in the membrane. The enzyme catalyses H2O(in) = H2O(out). In terms of biological role, water channel required to facilitate the transport of water across membranes. Involved in conidiation. This chain is Aquaporin-1, found in Botryotinia fuckeliana (strain B05.10) (Noble rot fungus).